The primary structure comprises 284 residues: Ribosomal RNA small subunit methyltransferase A (284 aa).

S-adenosyl-L-methionine-binding residues include Asn-33, Leu-35, Gly-60, Glu-81, Asp-101, and Asn-124.

This sequence belongs to the class I-like SAM-binding methyltransferase superfamily. rRNA adenine N(6)-methyltransferase family. RsmA subfamily.

The protein resides in the cytoplasm. It carries out the reaction adenosine(1518)/adenosine(1519) in 16S rRNA + 4 S-adenosyl-L-methionine = N(6)-dimethyladenosine(1518)/N(6)-dimethyladenosine(1519) in 16S rRNA + 4 S-adenosyl-L-homocysteine + 4 H(+). In terms of biological role, specifically dimethylates two adjacent adenosines (A1518 and A1519) in the loop of a conserved hairpin near the 3'-end of 16S rRNA in the 30S particle. May play a critical role in biogenesis of 30S subunits. The sequence is that of Ribosomal RNA small subunit methyltransferase A from Chlamydia felis (strain Fe/C-56) (Chlamydophila felis).